The sequence spans 269 residues: uncharacterized protein (269 aa).

Basic residues predominate over residues methionine 1–histidine 12. The segment at methionine 1–valine 82 is disordered. Residues proline 21–leucine 33 show a composition bias toward acidic residues. Positions glutamate 34–asparagine 63 are enriched in basic and acidic residues.

This is an uncharacterized protein from Dictyostelium discoideum (Social amoeba).